Consider the following 150-residue polypeptide: LEDGIYRLRAVTTHNPDPGVGGEYATVEGARRPVKAEPNTPPFFEQQIWQVTRNADGQYTIKYQGLNTPFEYGFSYDELEPNAPVIAGDPKEYILQLVPSTADVYIIRAPIQRIGVDVEEGGQQNTLTYKFFPVDGSGGDRPAWRFTREE.

It belongs to the protease inhibitor I48 family. Homodimer. As to expression, uniformly expressed throughout the mature fruiting body (at mRNA and protein level).

Functionally, binds and inhibits cysteine proteinases. Inhibits most strongly papain and cathepsin L, more weakly bromelain and cathepsin B while it is completely ineffective against cathepsin H. This Clitocybe nebularis (Clouded agaric) protein is Clitocypin (Cnc1).